A 109-amino-acid chain; its full sequence is Large ribosomal subunit protein uL22 (109 aa).

Belongs to the universal ribosomal protein uL22 family. In terms of assembly, part of the 50S ribosomal subunit.

This protein binds specifically to 23S rRNA; its binding is stimulated by other ribosomal proteins, e.g. L4, L17, and L20. It is important during the early stages of 50S assembly. It makes multiple contacts with different domains of the 23S rRNA in the assembled 50S subunit and ribosome. In terms of biological role, the globular domain of the protein is located near the polypeptide exit tunnel on the outside of the subunit, while an extended beta-hairpin is found that lines the wall of the exit tunnel in the center of the 70S ribosome. The sequence is that of Large ribosomal subunit protein uL22 from Azoarcus sp. (strain BH72).